The sequence spans 523 residues: UDP-glucuronosyltransferase 3A1 (523 aa).

The first 22 residues, M1–A22, serve as a signal peptide directing secretion. Over A23–D487 the chain is Extracellular. N-linked (GlcNAc...) asparagine glycosylation is present at N70. A helical transmembrane segment spans residues V488–V508. Topologically, residues A509–A523 are cytoplasmic.

The protein belongs to the UDP-glycosyltransferase family. Highly expressed in kidney, while it is expressed at low levels in liver. Not detected in other tissues examined.

It localises to the membrane. The catalysed reaction is glucuronate acceptor + UDP-alpha-D-glucuronate = acceptor beta-D-glucuronoside + UDP + H(+). UDP-glucuronosyltransferases catalyze phase II biotransformation reactions in which lipophilic substrates are conjugated with glucuronic acid to increase water solubility and enhance excretion. They are of major importance in the conjugation and subsequent elimination of potentially toxic xenobiotics and endogenous compounds. This Mus musculus (Mouse) protein is UDP-glucuronosyltransferase 3A1 (Ugt3a1).